The chain runs to 301 residues: Formamidopyrimidine-DNA glycosylase (301 aa).

The active-site Schiff-base intermediate with DNA is the Pro-2. Glu-3 acts as the Proton donor in catalysis. Lys-58 functions as the Proton donor; for beta-elimination activity in the catalytic mechanism. Positions 109, 131, and 174 each coordinate DNA. An FPG-type zinc finger spans residues 265 to 301; that stretch reads SVYDREGQACRTPGCGGTVARIVQAGRSTFYCATCQK. Arg-291 functions as the Proton donor; for delta-elimination activity in the catalytic mechanism.

The protein belongs to the FPG family. In terms of assembly, monomer. Zn(2+) is required as a cofactor.

The enzyme catalyses Hydrolysis of DNA containing ring-opened 7-methylguanine residues, releasing 2,6-diamino-4-hydroxy-5-(N-methyl)formamidopyrimidine.. The catalysed reaction is 2'-deoxyribonucleotide-(2'-deoxyribose 5'-phosphate)-2'-deoxyribonucleotide-DNA = a 3'-end 2'-deoxyribonucleotide-(2,3-dehydro-2,3-deoxyribose 5'-phosphate)-DNA + a 5'-end 5'-phospho-2'-deoxyribonucleoside-DNA + H(+). Its function is as follows. Involved in base excision repair of DNA damaged by oxidation or by mutagenic agents. Acts as a DNA glycosylase that recognizes and removes damaged bases. Has a preference for oxidized purines, such as 7,8-dihydro-8-oxoguanine (8-oxoG). Has AP (apurinic/apyrimidinic) lyase activity and introduces nicks in the DNA strand. Cleaves the DNA backbone by beta-delta elimination to generate a single-strand break at the site of the removed base with both 3'- and 5'-phosphates. This chain is Formamidopyrimidine-DNA glycosylase, found in Rhizobium leguminosarum bv. trifolii (strain WSM2304).